A 713-amino-acid chain; its full sequence is Oligopeptidase PhomG (713 aa).

Histidine 461 contacts Zn(2+). The active site involves glutamate 462. Residues histidine 465 and histidine 468 each contribute to the Zn(2+) site.

This sequence belongs to the peptidase M3 family. Monomer. Zn(2+) serves as cofactor.

It participates in mycotoxin biosynthesis. In terms of biological role, oligopeptidase; part of the gene cluster that mediates the biosynthesis of the phomopsins, a group of hexapeptide mycotoxins which infects lupins and causes lupinosis disease in livestock. Within the pathway, phomG and phomG' are probably involved in the processing of the phomA and phomA' precursors. The pathway starts with the processing of the precursor phomA by several endopeptidases including kexin proteases as well as the cluster-specific S41 family peptidase phomP1 and the oligopeptidase phomG to produce 10 identical copies of the hexapeptide Tyr-Val-Ile-Pro-Ile-Asp. After being excised from the precursor peptide, the core peptides are cyclized and modified post-translationally by enzymes encoded within the gene cluster. The timing and order of proteolysis of the phomA precursor and PTMs are still unknown. Two tyrosinase-like enzymes, phomQ1 and phomQ2, catalyze the chlorination and hydroxylation of Tyr, respectively. PhomYb, is proposed to be involved in the construction of the macrocyclic structure. The other 4 ustYa family proteins may be involved in PTMs that generate the unique structure of phomopsin A. PhomYa is required for the hydroxylation of C-beta of Tyr. PhomYc, phomYd, and phomYe are responsible for the biosynthesis of 2,3-dehydroisoleucine (dIle), 2,3-dehydroaspartic acid (dAsp), and 3,4-dehydroproline (dPro), respectively. While dIle formation by phomYc is indispensable for the installation of dAsp by phomYd, the order of the other PTMs have not been elucidated yet. Most of the biosynthetic enzymes likely have broad substrate specificity, and thus, there might be a metabolic grid from a precursor to phomopsin A. The enzyme(s) responsible for the biosynthesis of 3,4-dehydrovaline (dVal) have also not been identified yet. Finally, phomM acts as an S-adenosylmethionine-dependent alpha-N-methyltransferase that catalyzes two successive N-methylation reactions, converting N-desmethyl-phomopsin A to phomopsin A and phomopsin A further to an N,N-dimethylated congener called phomopsin E. This chain is Oligopeptidase PhomG, found in Diaporthe leptostromiformis (Lupinosis disease fungus).